We begin with the raw amino-acid sequence, 87 residues long: UPF0473 protein Dred_0776 (87 aa).

It belongs to the UPF0473 family.

In Desulforamulus reducens (strain ATCC BAA-1160 / DSM 100696 / MI-1) (Desulfotomaculum reducens), this protein is UPF0473 protein Dred_0776.